The chain runs to 694 residues: Elongation factor G (694 aa).

The region spanning 12 to 286 (SKLRNIGIMA…AVVDYLPSPI (275 aa)) is the tr-type G domain. GTP-binding positions include 21–28 (AHIDAGKT), 85–89 (DTPGH), and 139–142 (NKMD).

Belongs to the TRAFAC class translation factor GTPase superfamily. Classic translation factor GTPase family. EF-G/EF-2 subfamily.

The protein localises to the cytoplasm. In terms of biological role, catalyzes the GTP-dependent ribosomal translocation step during translation elongation. During this step, the ribosome changes from the pre-translocational (PRE) to the post-translocational (POST) state as the newly formed A-site-bound peptidyl-tRNA and P-site-bound deacylated tRNA move to the P and E sites, respectively. Catalyzes the coordinated movement of the two tRNA molecules, the mRNA and conformational changes in the ribosome. The sequence is that of Elongation factor G from Pseudothermotoga lettingae (strain ATCC BAA-301 / DSM 14385 / NBRC 107922 / TMO) (Thermotoga lettingae).